A 313-amino-acid chain; its full sequence is Ornithine carbamoyltransferase (313 aa).

Carbamoyl phosphate-binding positions include 57–60, Arg108, and 135–138; these read STRT and HPTQ. Residues Asn167, Asp231, and 235 to 236 each bind L-ornithine; that span reads SM. Residues 272-273 and Arg300 contribute to the carbamoyl phosphate site; that span reads CL.

It belongs to the aspartate/ornithine carbamoyltransferase superfamily. OTCase family.

It is found in the cytoplasm. It carries out the reaction carbamoyl phosphate + L-ornithine = L-citrulline + phosphate + H(+). It functions in the pathway amino-acid biosynthesis; L-arginine biosynthesis; L-arginine from L-ornithine and carbamoyl phosphate: step 1/3. Functionally, reversibly catalyzes the transfer of the carbamoyl group from carbamoyl phosphate (CP) to the N(epsilon) atom of ornithine (ORN) to produce L-citrulline. The chain is Ornithine carbamoyltransferase from Thermotoga maritima (strain ATCC 43589 / DSM 3109 / JCM 10099 / NBRC 100826 / MSB8).